Consider the following 224-residue polypeptide: N-terminal Xaa-Pro-Lys N-methyltransferase 1 (224 aa).

S-adenosyl-L-methionine-binding positions include G70, R75, 92–94, 120–121, and Q136; these read DVT and LQ.

The protein belongs to the methyltransferase superfamily. NTM1 family.

The protein resides in the nucleus. The enzyme catalyses N-terminal L-alanyl-L-prolyl-L-lysyl-[protein] + 3 S-adenosyl-L-methionine = N-terminal N,N,N-trimethyl-L-alanyl-L-prolyl-L-lysyl-[protein] + 3 S-adenosyl-L-homocysteine + 3 H(+). The catalysed reaction is N-terminal L-seryl-L-prolyl-L-lysyl-[protein] + 3 S-adenosyl-L-methionine = N-terminal N,N,N-trimethyl-L-seryl-L-prolyl-L-lysyl-[protein] + 3 S-adenosyl-L-homocysteine + 3 H(+). It carries out the reaction N-terminal L-prolyl-L-prolyl-L-lysyl-[protein] + 2 S-adenosyl-L-methionine = N-terminal N,N-dimethyl-L-prolyl-L-prolyl-L-lysyl-[protein] + 2 S-adenosyl-L-homocysteine + 2 H(+). Distributive alpha-N-methyltransferase that methylates the N-terminus of target proteins containing the N-terminal motif [Ala/Gly/Pro/Ser]-Pro-Lys when the initiator Met is cleaved. Specifically catalyzes mono-, di- or tri-methylation of the exposed alpha-amino group of the Ala, Gly or Ser residue in the [Ala/Gly/Ser]-Pro-Lys motif and mono- or di-methylation of Pro in the Pro-Pro-Lys motif. Required during mitosis for normal bipolar spindle formation and chromosome segregation via its action on target proteins. The chain is N-terminal Xaa-Pro-Lys N-methyltransferase 1 (ntmt1) from Xenopus tropicalis (Western clawed frog).